Here is a 524-residue protein sequence, read N- to C-terminus: MATAVWAAARLLRGSAALCARPKFGSPAHRRFSSGATYPNIPLSSPLPGVPKPIFATVDGQEKFETKVTTLDNGLRVASQNKFGQFCTLGILINSGSRYEAKYLSGIAHFLEKLAFSSTARFDSKDEILLTLEKHGGICDCQTSRDTTMYAVSADSKGLDTVVGLLADVVLHPRLTDEEIEMTRMAVQFELEDLNMRPDPEPLLTEMIHEAAFRENTVGLHRFCPVENIGKIDREVLHSYLKNYYTPDRMVLAGVGVEHEHLVECARKYLLGVQPAWGAPGAVWMLTAQWHSTRGGSSRWRETCQMSALRPPRFQSSHIYGGARELLLLEEDFIPFAVLNMMMGGGGSFSAGGPGKGMFSRLYLNVLNRHHWMYNATSYHHSYEDTGLLCIHASADPRQVREMVEIITKEFILMGRTVDLVELERAKTQLMSMLMMNLESRPVIFEDVGRQVLATHSRKLPHELCTLIRNVKPEDIKRVASKMLRGKPAVAALGDLTDLPTYEHIQAALSSRDGRLPRTYRLFR.

Residues 1-32 (MATAVWAAARLLRGSAALCARPKFGSPAHRRF) constitute a mitochondrion transit peptide. K63 carries the N6-succinyllysine modification.

It belongs to the peptidase M16 family. In terms of assembly, heterodimer of PMPCA (alpha) and PMPCB (beta) subunits, forming the mitochondrial processing protease (MPP) in which PMPCA is involved in substrate recognition and binding and PMPCB is the catalytic subunit.

The protein localises to the mitochondrion matrix. It localises to the mitochondrion inner membrane. Its function is as follows. Substrate recognition and binding subunit of the essential mitochondrial processing protease (MPP), which cleaves the mitochondrial sequence off newly imported precursors proteins. The protein is Mitochondrial-processing peptidase subunit alpha (Pmpca) of Rattus norvegicus (Rat).